The primary structure comprises 440 residues: Adenosylhomocysteinase (440 aa).

3 residues coordinate substrate: Thr-47, Asp-123, and Glu-148. 149 to 151 (TTT) serves as a coordination point for NAD(+). The substrate site is built by Lys-178 and Asp-182. NAD(+) contacts are provided by residues Asn-183, 228 to 233 (GFGDVG), Glu-251, 307 to 309 (IGH), and Asn-354.

It belongs to the adenosylhomocysteinase family. The cofactor is NAD(+).

It carries out the reaction S-adenosyl-L-homocysteine + H2O = L-homocysteine + adenosine. The protein operates within amino-acid biosynthesis; L-homocysteine biosynthesis; L-homocysteine from S-adenosyl-L-homocysteine: step 1/1. Adenosylhomocysteine is a competitive inhibitor of S-adenosyl-L-methionine-dependent methyl transferase reactions; therefore adenosylhomocysteinase may play a key role in the control of methylations via regulation of the intracellular concentration of adenosylhomocysteine. In Pneumocystis carinii, this protein is Adenosylhomocysteinase (SAHH).